The chain runs to 340 residues: GATA transcription factor 20 (340 aa).

The tract at residues 1-88 (MSHHDGSKPY…MEEDEDAQHH (88 aa)) is disordered. The segment covering 25–47 (ADDAAAHVAPTVDHLAAVAAEAE) has biased composition (low complexity). Basic and acidic residues predominate over residues 48-60 (AMARFEEEHRALG). Residues 61–84 (AEEEYEEEEDELEEEEEEMEEDED) are compositionally biased toward acidic residues. The Tify domain occupies 121–156 (QPMASNQLTLSFQGEVYVFDSVSPDKVQAVLLLLGG). Residues 182-224 (RVASLMRFREKRKERNFDKKIRYSVRKEVALRMQRNRGQFTSS) enclose the CCT domain. Residues 215-253 (QRNRGQFTSSKPKGDEATSELTASDGSPNWGSVEGRPPS) form a disordered region. Polar residues predominate over residues 233-244 (SELTASDGSPNW). The GATA-type zinc-finger motif lies at 257–284 (CHHCGINAKATPMMRRGPDGPRTLCNAC). A compositionally biased stretch (polar residues) spans 313–325 (DGNGSAAAPTTEQ). A disordered region spans residues 313–340 (DGNGSAAAPTTEQEIPAPATVNGHESST).

Belongs to the type IV zinc-finger family. Class C subfamily.

Its subcellular location is the nucleus. Its function is as follows. Transcriptional activator that specifically binds 5'-GATA-3' or 5'-GAT-3' motifs within gene promoters. The chain is GATA transcription factor 20 from Oryza sativa subsp. japonica (Rice).